Reading from the N-terminus, the 443-residue chain is Serine/threonine-protein phosphatase 2A 55 kDa regulatory subunit B beta isoform (443 aa).

WD repeat units lie at residues 22–61 (TEAD…KNQV), 87–128 (EIEE…KRPE), 171–209 (AHTY…QSFN), and 220–260 (ELTE…LCDR). The residue at position 275 (Ser-275) is a Phosphoserine. 3 WD repeats span residues 279 to 317 (EIIS…RPIE), 334 to 375 (ENDC…DVTL), and 410 to 442 (DFSK…QDKV). At Tyr-295 the chain carries Phosphotyrosine. Thr-298 is subject to Phosphothreonine.

It belongs to the phosphatase 2A regulatory subunit B family. As to quaternary structure, PP2A consists of a common heterodimeric core enzyme, composed of a 36 kDa catalytic subunit (subunit C) and a 65 kDa constant regulatory subunit (PR65 or subunit A), that associates with a variety of regulatory subunits. Proteins that associate with the core dimer include three families of regulatory subunits B (the R2/B/PR55/B55, R3/B''/PR72/PR130/PR59 and R5/B'/B56 families), the 48 kDa variable regulatory subunit, viral proteins, and cell signaling molecules. Interacts with TOMM22. Interacts with IER5 (via N- and C-terminal regions).

It is found in the cytoplasm. The protein localises to the cytoskeleton. Its subcellular location is the membrane. The B regulatory subunit might modulate substrate selectivity and catalytic activity, and might also direct the localization of the catalytic enzyme to a particular subcellular compartment. This is Serine/threonine-protein phosphatase 2A 55 kDa regulatory subunit B beta isoform (PPP2R2B) from Bos taurus (Bovine).